The following is a 213-amino-acid chain: Large ribosomal subunit protein bL25 (213 aa).

It belongs to the bacterial ribosomal protein bL25 family. CTC subfamily. In terms of assembly, part of the 50S ribosomal subunit; part of the 5S rRNA/L5/L18/L25 subcomplex. Contacts the 5S rRNA. Binds to the 5S rRNA independently of L5 and L18.

Functionally, this is one of the proteins that binds to the 5S RNA in the ribosome where it forms part of the central protuberance. The chain is Large ribosomal subunit protein bL25 from Mesorhizobium japonicum (strain LMG 29417 / CECT 9101 / MAFF 303099) (Mesorhizobium loti (strain MAFF 303099)).